A 494-amino-acid polypeptide reads, in one-letter code: Glycerol kinase (494 aa).

ADP is bound at residue Thr13. Thr13, Thr14, and Ser15 together coordinate ATP. Thr13 serves as a coordination point for sn-glycerol 3-phosphate. Residue Arg17 participates in ADP binding. Sn-glycerol 3-phosphate-binding residues include Arg83, Glu84, Tyr135, and Asp244. Glycerol is bound by residues Arg83, Glu84, Tyr135, Asp244, and Gln245. Positions 266 and 309 each coordinate ADP. Residues Thr266, Gly309, Gln313, and Gly410 each coordinate ATP. The ADP site is built by Gly410 and Asn414.

Belongs to the FGGY kinase family.

It carries out the reaction glycerol + ATP = sn-glycerol 3-phosphate + ADP + H(+). The protein operates within polyol metabolism; glycerol degradation via glycerol kinase pathway; sn-glycerol 3-phosphate from glycerol: step 1/1. Its activity is regulated as follows. Inhibited by fructose 1,6-bisphosphate (FBP). Its function is as follows. Key enzyme in the regulation of glycerol uptake and metabolism. Catalyzes the phosphorylation of glycerol to yield sn-glycerol 3-phosphate. This chain is Glycerol kinase, found in Shewanella sp. (strain ANA-3).